The primary structure comprises 86 residues: Small ribosomal subunit protein uS17 (86 aa).

It belongs to the universal ribosomal protein uS17 family. In terms of assembly, part of the 30S ribosomal subunit.

Its function is as follows. One of the primary rRNA binding proteins, it binds specifically to the 5'-end of 16S ribosomal RNA. This chain is Small ribosomal subunit protein uS17, found in Streptococcus thermophilus (strain CNRZ 1066).